Consider the following 141-residue polypeptide: Putative pre-16S rRNA nuclease (141 aa).

This sequence belongs to the YqgF nuclease family.

The protein localises to the cytoplasm. Could be a nuclease involved in processing of the 5'-end of pre-16S rRNA. This chain is Putative pre-16S rRNA nuclease, found in Natranaerobius thermophilus (strain ATCC BAA-1301 / DSM 18059 / JW/NM-WN-LF).